Consider the following 146-residue polypeptide: Hemoglobin subunit beta (146 aa).

Position 1 is an N-acetylvaline (Val1). The Globin domain occupies 2 to 146 (HLSGGEKSAV…VAHALGHKYH (145 aa)). Phosphothreonine is present on Thr12. At Lys59 the chain carries N6-acetyllysine. His63 contributes to the heme b binding site. Lys82 carries the post-translational modification N6-acetyllysine. His92 contributes to the heme b binding site. Cys93 bears the S-nitrosocysteine mark. Lys144 carries the post-translational modification N6-acetyllysine.

The protein belongs to the globin family. Heterotetramer of two alpha chains and two beta chains. Red blood cells.

In terms of biological role, involved in oxygen transport from the lung to the various peripheral tissues. In Ornithorhynchus anatinus (Duckbill platypus), this protein is Hemoglobin subunit beta (HBB).